A 435-amino-acid chain; its full sequence is uncharacterized protein (435 aa).

Position 47 is a phosphoserine (S47). Disordered regions lie at residues L174 to D210 and K290 to K372. A compositionally biased stretch (acidic residues) spans N195 to D210. Basic and acidic residues predominate over residues K290 to A304. A compositionally biased stretch (polar residues) spans S308–T318. Basic and acidic residues-rich tracts occupy residues E322–N340 and V347–D361.

The protein resides in the cytoplasm. This is an uncharacterized protein from Saccharomyces cerevisiae (strain ATCC 204508 / S288c) (Baker's yeast).